The following is a 172-amino-acid chain: Large ribosomal subunit protein uL10 (172 aa).

The protein belongs to the universal ribosomal protein uL10 family. Part of the ribosomal stalk of the 50S ribosomal subunit. The N-terminus interacts with L11 and the large rRNA to form the base of the stalk. The C-terminus forms an elongated spine to which L12 dimers bind in a sequential fashion forming a multimeric L10(L12)X complex.

Its function is as follows. Forms part of the ribosomal stalk, playing a central role in the interaction of the ribosome with GTP-bound translation factors. The protein is Large ribosomal subunit protein uL10 of Methylorubrum extorquens (strain CM4 / NCIMB 13688) (Methylobacterium extorquens).